A 784-amino-acid polypeptide reads, in one-letter code: SWI/SNF complex subunit SWI3C homolog (784 aa).

Residues 1-10 (MPRKASSTSD) are compositionally biased toward polar residues. The tract at residues 1–68 (MPRKASSTSD…PEDADDETLA (68 aa)) is disordered. Residues 24–39 (ASPSPSNRSSAAAAAA) are compositionally biased toward low complexity. The segment covering 43–66 (DDSDSAAVNEDDDSAVPEDADDET) has biased composition (acidic residues). The 100-residue stretch at 185–284 (HVVPKHSDWF…YLASGSVHRG (100 aa)) folds into the SWIRM domain. Residues 355 to 409 (LSESSCSYCLQPLTSLHYQSLKEADIALCSDCFHDARYITGHSSLDFQRIDGDND) form a ZZ-type; degenerate zinc finger. Residues cysteine 360, cysteine 363, cysteine 383, and cysteine 386 each contribute to the Zn(2+) site. Residues 413-464 (NDGDSWTDQETLLLLEGIEKYNDNWNNIAEHVGTKSKAQCIYHFIRLPVEDG) enclose the SANT domain. Disordered regions lie at residues 667–702 (LASPGNSLPGGSTSTMSSNPMSMSPRPMGVPGSMPQ) and 760–784 (GMPNSVTPNHHQLLRSSSGNNSSVG). Positions 675 to 695 (PGGSTSTMSSNPMSMSPRPMG) are enriched in low complexity.

In terms of assembly, interacts with LFR. Interacts with NMCP1.

The protein localises to the nucleus. Its subcellular location is the nucleoplasm. In terms of biological role, component of a multiprotein complex equivalent of the SWI/SNF complex, an ATP-dependent chromatin-remodeling complex, which is required for the positive and negative regulation of gene expression of a large number of genes. It changes chromatin structure by altering DNA-histone contacts within a nucleosome, leading eventually to a change in nucleosome position, thus facilitating or repressing binding of gene-specific transcription factors. May be involved in positive response to drought stress and modulation of root growth through its interaction with NMCP1. This is SWI/SNF complex subunit SWI3C homolog from Oryza sativa subsp. japonica (Rice).